The chain runs to 217 residues: DNA helicase assembly protein (217 aa).

It belongs to the Tequatrovirus DNA helicase assembly protein family. As to quaternary structure, monomer. Homohexamer; when associated with DNA. Interacts (via C-terminus) with the DnaB-like replicative helicase (via C-terminus); this interaction brings about the rapid assembly of the helicase onto ssDNA. Interacts (via C-terminus) with the single-stranded DNA-binding protein; a ternary complex between the helicase assembly protein, the single-stranded DNA-binding protein and ssDNA is an obligatory intermediate in the helicase loading mechanism. Interacts with the viral DNA polymerase. Binds to single and double-stranded DNA. Part of the replicase complex that includes the DNA polymerase, the polymerase clamp, the clamp loader complex, the single-stranded DNA binding protein (SSB), the primase, the DnaB-like replicative helicase and the helicase assembly factor.

In terms of biological role, DNA helicase loader protein that participates in viral DNA replication, recombination, and repair. At the fork, required for loading of the replicative helicase onto DNA protected by the ssDNA-binding protein. Coordinates simultaneous synthesis of leading- and lagging-strands. The protein is DNA helicase assembly protein of Enterobacteria phage T4 (Bacteriophage T4).